We begin with the raw amino-acid sequence, 264 residues long: Thiazole synthase (264 aa).

Lys-106 serves as the catalytic Schiff-base intermediate with DXP. Residues Gly-167, 193–194, and 215–216 contribute to the 1-deoxy-D-xylulose 5-phosphate site; these read AG and NT.

Belongs to the ThiG family. In terms of assembly, homotetramer. Forms heterodimers with either ThiH or ThiS.

The protein localises to the cytoplasm. It carries out the reaction [ThiS sulfur-carrier protein]-C-terminal-Gly-aminoethanethioate + 2-iminoacetate + 1-deoxy-D-xylulose 5-phosphate = [ThiS sulfur-carrier protein]-C-terminal Gly-Gly + 2-[(2R,5Z)-2-carboxy-4-methylthiazol-5(2H)-ylidene]ethyl phosphate + 2 H2O + H(+). It functions in the pathway cofactor biosynthesis; thiamine diphosphate biosynthesis. In terms of biological role, catalyzes the rearrangement of 1-deoxy-D-xylulose 5-phosphate (DXP) to produce the thiazole phosphate moiety of thiamine. Sulfur is provided by the thiocarboxylate moiety of the carrier protein ThiS. In vitro, sulfur can be provided by H(2)S. The polypeptide is Thiazole synthase (Thioalkalivibrio sulfidiphilus (strain HL-EbGR7)).